The following is a 61-amino-acid chain: MAVPKRKTSPSKRGMRRSADALKAPTYVEDKNSGELRRPHHIDLKTGMYRGRQVLTPKESA.

The segment covering 1 to 16 (MAVPKRKTSPSKRGMR) has biased composition (basic residues). Positions 1–61 (MAVPKRKTSP…RQVLTPKESA (61 aa)) are disordered. Over residues 28–44 (VEDKNSGELRRPHHIDL) the composition is skewed to basic and acidic residues.

It belongs to the bacterial ribosomal protein bL32 family.

The polypeptide is Large ribosomal subunit protein bL32 (Rhizobium etli (strain CIAT 652)).